Here is a 190-residue protein sequence, read N- to C-terminus: UPF0725 protein At2g20625 (190 aa).

This sequence belongs to the UPF0725 (EMB2204) family.

This Arabidopsis thaliana (Mouse-ear cress) protein is UPF0725 protein At2g20625.